A 366-amino-acid polypeptide reads, in one-letter code: MDPRGPVPQPFQQLQKPGRIRRRKTRRERNKALVSSHRPLARQDPPISSRDPCVILQDPVASAAPKLVVITQGRLSREHRGLFNHEVKSLDVARLLNRGALESHTPQLPTKPSCSPVGVQEPDLQSKGKENKVPGGSGPGPPNSPDLPVLGQLLEELQYQLIVPQAFPRRNLVQESRDTIIRTLQGCHGCVPDLALVLRGCQLPLPEAKPRVPERQRMASSCMEVPEHAPREGKQRTQQATKGCDFAIPHTCNSTTPAHRGSQVQPPGHQLPFLSSASSPSGAAWGPPTAFDMLKSIWLIATPPPPPPQPWDVRPPQPLPQPPSPLLPRTSALDWSPNPPAPLPSLSWVVTQSSPEAWSFPPMRLY.

Disordered regions lie at residues 1 to 53 (MDPR…RDPC), 102 to 149 (ESHT…DLPV), 256 to 286 (TPAH…AAWG), and 301 to 338 (ATPP…WSPN). Over residues 18 to 29 (GRIRRRKTRRER) the composition is skewed to basic residues. Polar residues-rich tracts occupy residues 104–113 (HTPQLPTKPS) and 256–265 (TPAHRGSQVQ). Positions 275–286 (SSASSPSGAAWG) are enriched in low complexity. Residues 302–326 (TPPPPPPQPWDVRPPQPLPQPPSPL) are compositionally biased toward pro residues.

As to quaternary structure, interacts with CNTD1. As to expression, preferentially expressed in gonads.

The protein resides in the nucleus. It is found in the chromosome. In terms of biological role, promotes meiotic crossing over formation through its interaction with CNTD1 by participating in the crossover differentiation step of crossover-specific recombination intermediates. This Mus musculus (Mouse) protein is Proline-rich protein 19.